Here is a 365-residue protein sequence, read N- to C-terminus: Cobalt-precorrin-5B C(1)-methyltransferase (365 aa).

This sequence belongs to the CbiD family.

It catalyses the reaction Co-precorrin-5B + S-adenosyl-L-methionine = Co-precorrin-6A + S-adenosyl-L-homocysteine. It participates in cofactor biosynthesis; adenosylcobalamin biosynthesis; cob(II)yrinate a,c-diamide from sirohydrochlorin (anaerobic route): step 6/10. Catalyzes the methylation of C-1 in cobalt-precorrin-5B to form cobalt-precorrin-6A. The protein is Cobalt-precorrin-5B C(1)-methyltransferase of Paraburkholderia phytofirmans (strain DSM 17436 / LMG 22146 / PsJN) (Burkholderia phytofirmans).